A 433-amino-acid chain; its full sequence is 4-hydroxy-3-methylbut-2-en-1-yl diphosphate synthase (flavodoxin) (433 aa).

The segment covering 1-10 has biased composition (polar residues); the sequence is MRYMQDSSMP. Residues 1–24 form a disordered region; that stretch reads MRYMQDSSMPCQDASPPDVGAAPR. Residues Cys-320, Cys-323, Cys-366, and Glu-373 each coordinate [4Fe-4S] cluster.

The protein belongs to the IspG family. The cofactor is [4Fe-4S] cluster.

It carries out the reaction (2E)-4-hydroxy-3-methylbut-2-enyl diphosphate + oxidized [flavodoxin] + H2O + 2 H(+) = 2-C-methyl-D-erythritol 2,4-cyclic diphosphate + reduced [flavodoxin]. The protein operates within isoprenoid biosynthesis; isopentenyl diphosphate biosynthesis via DXP pathway; isopentenyl diphosphate from 1-deoxy-D-xylulose 5-phosphate: step 5/6. Its function is as follows. Converts 2C-methyl-D-erythritol 2,4-cyclodiphosphate (ME-2,4cPP) into 1-hydroxy-2-methyl-2-(E)-butenyl 4-diphosphate. The protein is 4-hydroxy-3-methylbut-2-en-1-yl diphosphate synthase (flavodoxin) of Bordetella bronchiseptica (strain ATCC BAA-588 / NCTC 13252 / RB50) (Alcaligenes bronchisepticus).